The primary structure comprises 425 residues: MDLQLPRGTRDILPEEVSKWHFLETEFKNVCENYQYEEIRTPVFEHTELFERGVGDSTDIVSKEMYTFQDKGGRSLTLRPEGTASVVRAFVEHKLYGEVSQPIKMYYNEPMFRYERPQGGRQRQFTQMGIEALGSDDPSIDVEVISLAMEFFRKIGLTNIKLVINSLGDKESRLKHREALVAHFEPHIDEFCAECQVRLHKNPLRILDCKKDHDNPLIQSAPSILDFLNEESVAYFENVKNYLNALEIPFEIDPTMVRGLDYYNHTTFEIMSVEEGFGAKTTLCGGGRYHGLVREFGGPDTPGMGFGIGVERILLALEKADIEIPAKKPLEVYVITAQPEAELKGVTLVNKLRQNGISAEKDYLKRKFKAQLKDANRKNAVYTIILGEEELQTGNYQLKNMETGEQEAVSETTILEKLSNTKGEK.

It belongs to the class-II aminoacyl-tRNA synthetase family. Homodimer.

The protein localises to the cytoplasm. The catalysed reaction is tRNA(His) + L-histidine + ATP = L-histidyl-tRNA(His) + AMP + diphosphate + H(+). The polypeptide is Histidine--tRNA ligase (Listeria monocytogenes serovar 1/2a (strain ATCC BAA-679 / EGD-e)).